The following is a 1113-amino-acid chain: Carbamoyl phosphate synthase arginine-specific large chain (1113 aa).

A carboxyphosphate synthetic domain region spans residues 23–420; that stretch reads QLIKGIDSVL…AFQKAFRQVD (398 aa). Arg150, Arg190, Gly196, Gly197, Lys227, Leu229, Glu234, Gly260, Ile261, His262, Gln303, and Glu317 together coordinate ATP. In terms of domain architecture, ATP-grasp 1 spans 154–346; sequence ARALKEINMP…LAYTAAKIAL (193 aa). Positions 303, 317, and 319 each coordinate Mg(2+). Residues Gln303, Glu317, and Asn319 each contribute to the Mn(2+) site. The tract at residues 421–568 is oligomerization domain; sequence PSLLGFQGSD…YVTYNAVKDD (148 aa). Positions 569 to 955 are carbamoyl phosphate synthetic domain; that stretch reads VTFGDNGIMV…SYWVALQGLM (387 aa). In terms of domain architecture, ATP-grasp 2 spans 693–888; the sequence is STILDTLGLD…FVEIAVKAFL (196 aa). ATP contacts are provided by Arg729, Lys768, Ile770, Glu775, Gly800, Val801, His802, Ser803, Gln843, and Glu859. Residues Gln843, Glu859, and Asn861 each coordinate Mg(2+). Residues Gln843, Glu859, and Asn861 each coordinate Mn(2+). Positions 956 to 1097 are allosteric domain; sequence SFCVPLPPSG…EMRQSDGPET (142 aa). One can recognise an MGS-like domain in the interval 957 to 1113; sequence FCVPLPPSGI…WREYLGFKPT (157 aa).

The protein belongs to the CarB family. As to quaternary structure, heterodimer composed of 2 chains; the small (or glutamine) chain promotes the hydrolysis of glutamine to ammonia, which is used by the large (or ammonia) chain to synthesize carbamoyl phosphate. It depends on Mg(2+) as a cofactor. Requires Mn(2+) as cofactor.

Its subcellular location is the cytoplasm. The catalysed reaction is hydrogencarbonate + L-glutamine + 2 ATP + H2O = carbamoyl phosphate + L-glutamate + 2 ADP + phosphate + 2 H(+). The enzyme catalyses hydrogencarbonate + NH4(+) + 2 ATP = carbamoyl phosphate + 2 ADP + phosphate + 2 H(+). It participates in amino-acid biosynthesis; L-arginine biosynthesis; carbamoyl phosphate from bicarbonate: step 1/1. Its function is as follows. Large subunit of the arginine-specific carbamoyl phosphate synthase (CPSase). CPSase catalyzes the formation of carbamoyl phosphate from the ammonia moiety of glutamine, hydrogencarbonate, and phosphate donated by ATP, constituting the first step of 2 biosynthetic pathways, one leading to arginine and/or urea and the other to pyrimidine nucleotides. The large subunit (synthetase) binds the substrates ammonia (free or transferred from glutamine from the small subunit), hydrogencarbonate and ATP and carries out an ATP-coupled ligase reaction, activating hydrogencarbonate by forming carboxy phosphate which reacts with ammonia to form carbamoyl phosphate. The chain is Carbamoyl phosphate synthase arginine-specific large chain (CPA2) from Eremothecium gossypii (strain ATCC 10895 / CBS 109.51 / FGSC 9923 / NRRL Y-1056) (Yeast).